The following is a 627-amino-acid chain: (R)-linalool synthase 1, chloroplastic (627 aa).

The transit peptide at 1–21 (MAFVSIAPLASRCCVHKSFVS) directs the protein to the chloroplast. Mg(2+)-binding residues include Asp378, Asp382, and Glu530. Positions 378-382 (DDIYD) match the DDXXD motif motif.

This sequence belongs to the terpene synthase family. Tpsd subfamily. Mg(2+) serves as cofactor. Mn(2+) is required as a cofactor.

Its subcellular location is the plastid. It localises to the chloroplast. It catalyses the reaction (2E)-geranyl diphosphate + H2O = (R)-linalool + diphosphate. Its pathway is terpene metabolism; oleoresin biosynthesis. In terms of biological role, terpene synthase (TPS) involved in the biosynthesis of monoterpene natural products included in conifer oleoresin secretions and volatile emissions; these compounds contribute to biotic and abiotic stress defense against herbivores and pathogens. Catalyzes the conversion of (2E)-geranyl diphosphate (GPP) to (R)-linalool. The protein is (R)-linalool synthase 1, chloroplastic of Picea sitchensis (Sitka spruce).